A 163-amino-acid polypeptide reads, in one-letter code: Lysosomal enzyme trafficking factor (163 aa).

2 helical membrane passes run 40–60 (MGWIGVGLYLLASAAAFYYVF) and 98–118 (LPFWLWTIIFLIPYLQMFLFL).

The protein belongs to the LYSET family. Interacts with GNPTAB; this interaction is important for proper localization of GNPTAB in Golgi stacks. Interacts with MBTPS1.

The protein resides in the golgi apparatus membrane. Its function is as follows. Required for mannose-6-phosphate-dependent trafficking of lysosomal enzymes. LYSET bridges GlcNAc-1-phosphate transferase (GNPTAB), to the membrane-bound transcription factor site-1 protease (MBTPS1), thus allowing proteolytic activation of the GNPTAB. GNPTAB is involved in the regulation of M6P-dependent Golgi-to-lysosome trafficking of lysosomal enzymes. LYSET is thus an essential factor for maturation and delivery of lysosomal hydrolases. Plays an essential function for cells that depend on lysosomal catabolism to generate nutrients. In Mus musculus (Mouse), this protein is Lysosomal enzyme trafficking factor (Lyset).